A 419-amino-acid chain; its full sequence is Peptide chain release factor subunit 1 (419 aa).

It belongs to the eukaryotic release factor 1 family. Heterodimer of two subunits, one of which binds GTP.

The protein localises to the cytoplasm. Its function is as follows. Directs the termination of nascent peptide synthesis (translation) in response to the termination codons UAA, UAG and UGA. In Methanococcus vannielii (strain ATCC 35089 / DSM 1224 / JCM 13029 / OCM 148 / SB), this protein is Peptide chain release factor subunit 1.